We begin with the raw amino-acid sequence, 218 residues long: MMP 1-O-methyltransferase (218 aa).

Phe20, Gly46, Ser52, Asp71, Gly75, and Ser124 together coordinate S-adenosyl-L-methionine. Asp141 is a binding site for Mg(2+). Catalysis depends on His144, which acts as the Proton acceptor. Arg151 contributes to the S-adenosyl-L-methionine binding site. Residues His169 and Asp170 each contribute to the Mg(2+) site.

This sequence belongs to the methyltransferase superfamily. In terms of assembly, homodimer. It depends on Mg(2+) as a cofactor.

It carries out the reaction 3,3'-di-O-methyl-4alpha-mannobiose + S-adenosyl-L-methionine = 1,3,3'-tri-O-methyl-4alpha-mannobiose + S-adenosyl-L-homocysteine + H(+). Inhibited by EDTA. In terms of biological role, involved in the biosynthesis of 3-O-methylmannose polysaccharides (MMP), which are intracellular polymethylated polysaccharides implicated in the modulation of fatty acid metabolism in non-tuberculous mycobacteria. Specifically methylates the 1-OH position of 3,3'-di-O-methyl-4alpha-mannobiose, a probable early precursor of MMP, yielding the reducing end dimannoside of MMP. The chain is MMP 1-O-methyltransferase from Mycolicibacterium hassiacum (strain DSM 44199 / CIP 105218 / JCM 12690 / 3849) (Mycobacterium hassiacum).